Consider the following 294-residue polypeptide: Lipoprotein NlpI (294 aa).

An N-terminal signal peptide occupies residues 1–18 (MKPFLRWCFVATALTLAG). Residue cysteine 19 is the site of N-palmitoyl cysteine attachment. Cysteine 19 carries S-diacylglycerol cysteine lipidation. TPR repeat units lie at residues 62–95 (AQLL…RPDM), 96–129 (PEVF…DPTY), and 234–267 (SETN…NVHN).

In terms of assembly, homodimer.

It localises to the cell membrane. Its function is as follows. May be involved in cell division. May play a role in bacterial septation or regulation of cell wall degradation during cell division. This Escherichia coli O157:H7 protein is Lipoprotein NlpI (nlpI).